We begin with the raw amino-acid sequence, 438 residues long: Probable exopolygalacturonase B (438 aa).

The N-terminal stretch at 1-15 is a signal peptide; it reads MYLLPLTLFLTAAFG. N-linked (GlcNAc...) asparagine glycosylation is found at asparagine 118, asparagine 185, and asparagine 225. The PbH1 1 repeat unit spans residues 209–248; the sequence is TNDVSFDNVYIHAFSTNASSDPANTDGMDSLDVDGVSFTN. Aspartate 255 acts as the Proton donor in catalysis. A disulfide bridge connects residues cysteine 257 and cysteine 274. N-linked (GlcNAc...) asparagine glycans are attached at residues asparagine 263 and asparagine 275. Histidine 278 is an active-site residue. PbH1 repeat units follow at residues 295-316 and 327-348; these read IENV…RLKA and INNV…VLDQ. 4 N-linked (GlcNAc...) asparagine glycosylation sites follow: asparagine 302, asparagine 329, asparagine 354, and asparagine 366. Cysteine 392 and cysteine 398 are disulfide-bonded. One copy of the PbH1 4 repeat lies at 398 to 430; it reads CTNITLSNVNLTSPKGTAEIVCDDIQGGIGVDC. 2 N-linked (GlcNAc...) asparagine glycosylation sites follow: asparagine 400 and asparagine 407.

It belongs to the glycosyl hydrolase 28 family.

The protein resides in the secreted. It catalyses the reaction [(1-&gt;4)-alpha-D-galacturonosyl](n) + H2O = alpha-D-galacturonate + [(1-&gt;4)-alpha-D-galacturonosyl](n-1). In terms of biological role, specific in hydrolyzing the terminal glycosidic bond of polygalacturonic acid and oligogalacturonates. The sequence is that of Probable exopolygalacturonase B (pgxB) from Aspergillus niger (strain ATCC MYA-4892 / CBS 513.88 / FGSC A1513).